The chain runs to 273 residues: Testis-specific serine/threonine-protein kinase 6 (273 aa).

The Protein kinase domain maps to 12–267; the sequence is YKLGRTIGEG…AGQVARNGWL (256 aa). ATP contacts are provided by residues 18–26 and K41; that span reads IGEGSYSKV. D135 acts as the Proton acceptor in catalysis.

The protein belongs to the protein kinase superfamily. CAMK Ser/Thr protein kinase family. As to quaternary structure, microtubule inner protein component of sperm flagellar doublet microtubules. Interacts with HSP90; this interaction stabilizes and activates TSSK6. Interacts with the heat shock proteins HSPCB, HSPA8 and HSPA1A. These interactions appear to be required for TSSK6 kinase activity. Interacts with TSACC; this interaction is direct and recruits TSACC to HSP90, which is essential for kinase activity. The cofactor is Mg(2+). Autophosphorylated. In terms of processing, ubiquitinated; HSP90 activity negatively regulates ubiquitination and degradation. In terms of tissue distribution, expressed in the testis, localized to the heads of elongating spermatids.

Its subcellular location is the cytoplasm. The protein resides in the cytoskeleton. It localises to the flagellum axoneme. The protein localises to the nucleus. The enzyme catalyses L-seryl-[protein] + ATP = O-phospho-L-seryl-[protein] + ADP + H(+). The catalysed reaction is L-threonyl-[protein] + ATP = O-phospho-L-threonyl-[protein] + ADP + H(+). Serine/threonine-protein kinase component of the sperm flagellar doublet microtubules. May act as a regulator of sperm motility by mediating phosphorylation of sperm doublet microtubule proteins. Plays a role in DNA condensation during postmeiotic chromatin remodeling and histone-to-protamine transition during spermatogenesis. This chain is Testis-specific serine/threonine-protein kinase 6, found in Mus musculus (Mouse).